The primary structure comprises 1791 residues: Protein TIC 214 (1791 aa).

Transmembrane regions (helical) follow at residues 19-39, 68-88, 91-111, 133-153, 176-196, and 227-247; these read IINS…FSIG, FIAG…HLAL, PHTI…WNNH, VFLN…SSML, VGWL…LVWI, and IFSI…PSPI. The tract at residues 1492 to 1511 is disordered; the sequence is ASQVELESDKENKKNPESAL. Residues 1498-1511 show a composition bias toward basic and acidic residues; the sequence is ESDKENKKNPESAL.

This sequence belongs to the TIC214 family. In terms of assembly, part of the Tic complex.

It localises to the plastid. The protein resides in the chloroplast inner membrane. Involved in protein precursor import into chloroplasts. May be part of an intermediate translocation complex acting as a protein-conducting channel at the inner envelope. The sequence is that of Protein TIC 214 from Barbarea verna (Land cress).